We begin with the raw amino-acid sequence, 128 residues long: Nascent polypeptide-associated complex protein (128 aa).

Positions 8 to 75 (PRMLKKMQKM…PKKIKKEKVE (68 aa)) constitute an NAC-A/B domain.

The protein belongs to the NAC-alpha family. Homodimer. Interacts with the ribosome. Binds ribosomal RNA.

Functionally, contacts the emerging nascent chain on the ribosome. In Methanocaldococcus jannaschii (strain ATCC 43067 / DSM 2661 / JAL-1 / JCM 10045 / NBRC 100440) (Methanococcus jannaschii), this protein is Nascent polypeptide-associated complex protein.